The following is a 363-amino-acid chain: Protein disulfide-isomerase 1 (363 aa).

Residues Met1–Ala20 form the signal peptide. Thioredoxin domains lie at Glu21–Lys132 and Thr133–Glu285. Active-site nucleophile residues include Cys51, Cys54, Cys172, and Cys175. Intrachain disulfides connect Cys51-Cys54 and Cys172-Cys175.

It belongs to the protein disulfide isomerase family.

It is found in the endoplasmic reticulum lumen. It carries out the reaction Catalyzes the rearrangement of -S-S- bonds in proteins.. Functionally, participates in the folding of proteins containing disulfide bonds, may be involved in glycosylation, prolyl hydroxylation and triglyceride transfer. This chain is Protein disulfide-isomerase 1 (pdi1), found in Dictyostelium discoideum (Social amoeba).